Consider the following 302-residue polypeptide: Bifunctional protein FolD 2 (302 aa).

NADP(+) contacts are provided by residues 170-172 (GRS), serine 195, and isoleucine 236.

It belongs to the tetrahydrofolate dehydrogenase/cyclohydrolase family. In terms of assembly, homodimer.

It catalyses the reaction (6R)-5,10-methylene-5,6,7,8-tetrahydrofolate + NADP(+) = (6R)-5,10-methenyltetrahydrofolate + NADPH. It carries out the reaction (6R)-5,10-methenyltetrahydrofolate + H2O = (6R)-10-formyltetrahydrofolate + H(+). Its pathway is one-carbon metabolism; tetrahydrofolate interconversion. Functionally, catalyzes the oxidation of 5,10-methylenetetrahydrofolate to 5,10-methenyltetrahydrofolate and then the hydrolysis of 5,10-methenyltetrahydrofolate to 10-formyltetrahydrofolate. The chain is Bifunctional protein FolD 2 from Paracoccus denitrificans (strain Pd 1222).